The following is a 59-amino-acid chain: Large ribosomal subunit protein bL32 (59 aa).

Over residues 1–16 (MAVPKRKTSPSKRGMR) the composition is skewed to basic residues. Positions 1–41 (MAVPKRKTSPSKRGMRRSADALKAPTYIEDKNSGELRRPHH) are disordered. Residues 28 to 41 (IEDKNSGELRRPHH) show a composition bias toward basic and acidic residues.

The protein belongs to the bacterial ribosomal protein bL32 family.

The polypeptide is Large ribosomal subunit protein bL32 (Bartonella henselae (strain ATCC 49882 / DSM 28221 / CCUG 30454 / Houston 1) (Rochalimaea henselae)).